We begin with the raw amino-acid sequence, 591 residues long: L-fucose isomerase (591 aa).

Catalysis depends on proton acceptor residues E337 and D361. Mn(2+) is bound by residues E337, D361, and H528.

The protein belongs to the L-fucose isomerase family. As to quaternary structure, homohexamer. It depends on Mn(2+) as a cofactor.

Its subcellular location is the cytoplasm. It carries out the reaction L-fucose = L-fuculose. It participates in carbohydrate degradation; L-fucose degradation; L-lactaldehyde and glycerone phosphate from L-fucose: step 1/3. In terms of biological role, converts the aldose L-fucose into the corresponding ketose L-fuculose. This is L-fucose isomerase from Klebsiella pneumoniae subsp. pneumoniae (strain ATCC 700721 / MGH 78578).